Reading from the N-terminus, the 289-residue chain is ATP synthase gamma chain (289 aa).

It belongs to the ATPase gamma chain family. F-type ATPases have 2 components, CF(1) - the catalytic core - and CF(0) - the membrane proton channel. CF(1) has five subunits: alpha(3), beta(3), gamma(1), delta(1), epsilon(1). CF(0) has three main subunits: a, b and c.

It is found in the cell inner membrane. In terms of biological role, produces ATP from ADP in the presence of a proton gradient across the membrane. The gamma chain is believed to be important in regulating ATPase activity and the flow of protons through the CF(0) complex. This is ATP synthase gamma chain from Azoarcus sp. (strain BH72).